We begin with the raw amino-acid sequence, 401 residues long: Splicing factor 45 (401 aa).

The residue at position 2 (Ser-2) is an N-acetylserine. At Ser-2 the chain carries Phosphoserine. A Glycyl lysine isopeptide (Lys-Gly) (interchain with G-Cter in SUMO2) cross-link involves residue Lys-15. Lys-21 is subject to N6-acetyllysine. Glycyl lysine isopeptide (Lys-Gly) (interchain with G-Cter in SUMO2) cross-links involve residues Lys-24 and Lys-33. An N6-acetyllysine; alternate modification is found at Lys-41. Lys-41 is covalently cross-linked (Glycyl lysine isopeptide (Lys-Gly) (interchain with G-Cter in SUMO2); alternate). Positions Leu-57–Ile-68 are enriched in basic and acidic residues. 2 disordered regions span residues Leu-57 to Pro-84 and Arg-114 to Asn-233. A Glycyl lysine isopeptide (Lys-Gly) (interchain with G-Cter in SUMO2) cross-link involves residue Lys-58. Thr-71 carries the phosphothreonine modification. Residues Arg-114–Pro-153 are compositionally biased toward basic and acidic residues. Phosphoserine is present on residues Ser-155 and Ser-169. Positions Val-182–Pro-200 are enriched in basic and acidic residues. Ser-222 carries the post-translational modification Phosphoserine. Residues Gly-235–Thr-283 enclose the G-patch domain. Residue Thr-237 is modified to Phosphothreonine. Residue Lys-256 forms a Glycyl lysine isopeptide (Lys-Gly) (interchain with G-Cter in SUMO2) linkage. Ser-266 is subject to Phosphoserine. Lys-276 participates in a covalent cross-link: Glycyl lysine isopeptide (Lys-Gly) (interchain with G-Cter in SUMO2). Phosphoserine occurs at positions 291 and 293. An RRM domain is found at Val-306–Cys-385.

In terms of assembly, binds SXL. Associates with the spliceosome. Interacts with SF3B1, SF1 and U2AF2.

The protein resides in the nucleus. Its function is as follows. Splice factor that binds to the single-stranded 3'AG at the exon/intron border and promotes its utilization in the second catalytic step. Involved in the regulation of alternative splicing and the utilization of cryptic splice sites. Promotes the utilization of a cryptic splice site created by the beta-110 mutation in the HBB gene. The resulting frameshift leads to sickle cell anemia. This Homo sapiens (Human) protein is Splicing factor 45 (RBM17).